The following is a 1925-amino-acid chain: Methylcytosine dioxygenase tet3-A (1925 aa).

A CXXC-type zinc finger spans residues 62–103; the sequence is SNKKRKRCGVCVPCLRKEPCGACYNCVNRSTSHQICKMRKCE. Residues Cys69, Cys72, Cys75, Cys81, Cys84, Cys87, Cys97, and Cys102 each coordinate Zn(2+). Disordered regions lie at residues 457–476, 630–685, 774–812, and 833–892; these read KNAL…QNKK, KSQK…NAVF, GAKD…QNDL, and DFSL…PISH. Residues 465 to 476 are compositionally biased toward polar residues; it reads SPRQTSWEQNKK. Residues 665 to 677 show a composition bias toward basic residues; sequence KPPRKQVQIKKPR. Low complexity predominate over residues 777–797; the sequence is DSCPTPSTDDASSSSGQGDSA. 2 stretches are compositionally biased toward polar residues: residues 841–856 and 883–892; these read APSQ…QISG and PALSNNPISH. Positions 982, 984, 1042, 1068, and 1070 each coordinate Zn(2+). Arg1110 contributes to the 2-oxoglutarate binding site. Residues Cys1120, Cys1122, Cys1138, Cys1147, and Cys1207 each contribute to the Zn(2+) site. Cys1223 contributes to the 2-oxoglutarate binding site. A Zn(2+)-binding site is contributed by His1229. The Fe cation site is built by His1231 and Asp1233. Residue His1265 coordinates 2-oxoglutarate. Disordered stretches follow at residues 1307 to 1364, 1474 to 1513, 1556 to 1600, and 1722 to 1769; these read SEPA…QTKP, LADG…KSFN, SVHS…LPND, and NWAS…EEEI. Positions 1316 to 1347 are enriched in basic and acidic residues; it reads RQLDAKKAAAEKKKLQKEKLVSPDKTKQEPAD. Residues 1350–1363 show a composition bias toward polar residues; that stretch reads MCQQNPGVPQQQTK. The span at 1490–1499 shows a compositional bias: basic and acidic residues; that stretch reads SYRRSSEVPH. Polar residues-rich tracts occupy residues 1502–1513, 1556–1572, and 1730–1742; these read SLQNPNSQKSFN, SVHS…QTSD, and VGNS…SQNH. His1804 contributes to the Fe cation binding site. 1819–1821 serves as a coordination point for 2-oxoglutarate; the sequence is RIS. Residues 1837 to 1870 are a coiled coil; sequence LALWEAKMKLLAERARVKEEEAARLGIKQEVKSL.

It belongs to the TET family. The cofactor is Fe(2+). Zn(2+) is required as a cofactor. Detected in embryo (at protein level). Detected in embryonic head, in developing brain, neural tube and eye.

It localises to the nucleus. The protein localises to the chromosome. It carries out the reaction a 5-methyl-2'-deoxycytidine in DNA + 2-oxoglutarate + O2 = a 5-hydroxymethyl-2'-deoxycytidine in DNA + succinate + CO2. The catalysed reaction is a 5-hydroxymethyl-2'-deoxycytidine in DNA + 2-oxoglutarate + O2 = a 5-formyl-2'-deoxycytidine in DNA + succinate + CO2 + H2O. It catalyses the reaction a 5-formyl-2'-deoxycytidine in DNA + 2-oxoglutarate + O2 = a 5-carboxyl-2'-deoxycytidine in DNA + succinate + CO2 + H(+). In terms of biological role, dioxygenase that catalyzes the conversion of the modified genomic base 5-methylcytosine (5mC) into 5-hydroxymethylcytosine (5hmC) and plays a key role in epigenetic chromatin reprogramming during embryonic development. Conversion of 5mC into 5hmC probably constitutes the first step in cytosine demethylation. Selectively binds to the promoter region of target genes and contributes to regulate the expression of numerous developmental genes, including pax6, rax, sox9 and six3. May also contribute to the regulation of target genes in ways that do not require its enzyme activity. This Xenopus laevis (African clawed frog) protein is Methylcytosine dioxygenase tet3-A.